A 690-amino-acid polypeptide reads, in one-letter code: Ras guanyl-releasing protein 3 (690 aa).

The 123-residue stretch at Ser3–Ser125 folds into the N-terminal Ras-GEF domain. The Ras-GEF domain occupies Glu152 to Arg383. EF-hand domains follow at residues His420 to Leu455 and Phe458 to Gln484. The Ca(2+) site is built by Asp433, Asp435, Asp437, Tyr439, Asp444, Asp462, Asp464, Asp466, and Glu473. Residues Ile494–Cys544 form a Phorbol-ester/DAG-type zinc finger. A disordered region spans residues Val667–Gly690.

This sequence belongs to the RASGRP family.

Guanine nucleotide exchange factor (GEF) for Ras and Rap1. The sequence is that of Ras guanyl-releasing protein 3 (RASGRP3) from Homo sapiens (Human).